The primary structure comprises 555 residues: Energy-dependent translational throttle protein EttA (555 aa).

ABC transporter domains lie at 6–259 (YTMH…AQEA) and 324–550 (LEVS…RIKY). 39-46 (GLNGAGKS) contributes to the ATP binding site. The arm stretch occupies residues 95-139 (SEVVNALKRLDEVYALYADPDADFDKLAAEQGRLEEIIQAHDGHN). A ptIM region spans residues 242–322 (GNYSSWLEQK…IPPGPRLGDK (81 aa)). Position 356–363 (356–363 (GPNGAGKS)) interacts with ATP.

It belongs to the ABC transporter superfamily. ABCF family. Translational throttle EttA subfamily. In terms of assembly, monomer. Probably contacts ribosomal proteins L1, L5, L33 and S7, the 16S and 23S rRNA and the P-site containing tRNA(fMet).

It localises to the cytoplasm. It catalyses the reaction ATP + H2O = ADP + phosphate + H(+). A translation factor that gates the progression of the 70S ribosomal initiation complex (IC, containing tRNA(fMet) in the P-site) into the translation elongation cycle by using a mechanism sensitive to the ATP/ADP ratio. Binds to the 70S ribosome E-site where it modulates the state of the translating ribosome during subunit translocation. ATP hydrolysis probably frees it from the ribosome, which can enter the elongation phase. This Escherichia coli O6:H1 (strain CFT073 / ATCC 700928 / UPEC) protein is Energy-dependent translational throttle protein EttA.